The chain runs to 101 residues: Small ribosomal subunit protein uS14 (101 aa).

It belongs to the universal ribosomal protein uS14 family. In terms of assembly, part of the 30S ribosomal subunit. Contacts proteins S3 and S10.

Functionally, binds 16S rRNA, required for the assembly of 30S particles and may also be responsible for determining the conformation of the 16S rRNA at the A site. The polypeptide is Small ribosomal subunit protein uS14 (Phenylobacterium zucineum (strain HLK1)).